Consider the following 75-residue polypeptide: DNA-directed RNA polymerase subunit omega (75 aa).

It belongs to the RNA polymerase subunit omega family. The RNAP catalytic core consists of 2 alpha, 1 beta, 1 beta' and 1 omega subunit. When a sigma factor is associated with the core the holoenzyme is formed, which can initiate transcription.

The catalysed reaction is RNA(n) + a ribonucleoside 5'-triphosphate = RNA(n+1) + diphosphate. Promotes RNA polymerase assembly. Latches the N- and C-terminal regions of the beta' subunit thereby facilitating its interaction with the beta and alpha subunits. The polypeptide is DNA-directed RNA polymerase subunit omega (Lysinibacillus sphaericus (strain C3-41)).